The chain runs to 1051 residues: Ubiquitin-activating enzyme E1 1 (1051 aa).

Repeat copies occupy residues 56 to 194 (GRET…GSVF) and 453 to 605 (GSKL…QMVI). The segment at 56–605 (GRETMKRLFG…GAKCNTQMVI (550 aa)) is 2 approximate repeats. ATP contacts are provided by residues Ala-472, Asp-498, Arg-509, Lys-522, and 570–571 (DN). The active-site Glycyl thioester intermediate is the Cys-626.

The protein belongs to the ubiquitin-activating E1 family. In terms of assembly, monomer. The N-terminus is blocked.

It catalyses the reaction ATP + ubiquitin + [E1 ubiquitin-activating enzyme]-L-cysteine = AMP + diphosphate + S-ubiquitinyl-[E1 ubiquitin-activating enzyme]-L-cysteine.. Its pathway is protein modification; protein ubiquitination. Functionally, activates ubiquitin by first adenylating its C-terminal glycine residue with ATP, and thereafter linking this residue to the side chain of a cysteine residue in E1, yielding a ubiquitin-E1 thioester and free AMP. The chain is Ubiquitin-activating enzyme E1 1 from Triticum aestivum (Wheat).